Here is a 494-residue protein sequence, read N- to C-terminus: Hepatic triacylglycerol lipase (494 aa).

Residues 1–21 (MGNHLQISVSLVLCIFIQSSA) form the signal peptide. Asn-79 carries N-linked (GlcNAc...) asparagine glycosylation. Ser-169 acts as the Nucleophile in catalysis. The active-site Charge relay system is Asp-195. The tract at residues 255-278 (CHFLELYKHIAEHGLNAITQTINC) is essential for determining substrate specificity. The active-site Charge relay system is the His-280. The region spanning 353 to 487 (YHYQFKIQFI…HPTQEKVFVK (135 aa)) is the PLAT domain. Residue Asn-398 is glycosylated (N-linked (GlcNAc...) asparagine).

It belongs to the AB hydrolase superfamily. Lipase family. As to quaternary structure, homodimer.

Its subcellular location is the secreted. It catalyses the reaction a triacylglycerol + H2O = a diacylglycerol + a fatty acid + H(+). The enzyme catalyses a 1-acyl-sn-glycero-3-phosphocholine + H2O = sn-glycerol 3-phosphocholine + a fatty acid + H(+). It carries out the reaction a 1,2-diacyl-sn-glycero-3-phosphocholine + H2O = a 2-acyl-sn-glycero-3-phosphocholine + a fatty acid + H(+). The catalysed reaction is 1,2-di-(9Z-octadecenoyl)-sn-glycerol + H2O = 2-(9Z-octadecenoyl)-glycerol + (9Z)-octadecenoate + H(+). It catalyses the reaction 1,2,3-tri-(9Z-octadecenoyl)-glycerol + H2O = 2,3-di-(9Z)-octadecenoyl-sn-glycerol + (9Z)-octadecenoate + H(+). The enzyme catalyses 1-(9Z-octadecenoyl)-sn-glycero-3-phospho-L-serine + H2O = sn-glycero-3-phospho-L-serine + (9Z)-octadecenoate + H(+). It carries out the reaction 1-hexadecanoyl-sn-glycero-3-phosphocholine + H2O = sn-glycerol 3-phosphocholine + hexadecanoate + H(+). The catalysed reaction is 1,3-di-(9Z-octadecenoyl)-glycerol + H2O = 3-(9Z-octadecenoyl)-sn-glycerol + (9Z)-octadecenoate + H(+). It catalyses the reaction 1,2,3-tri-(9Z-octadecenoyl)-glycerol + H2O = di-(9Z)-octadecenoylglycerol + (9Z)-octadecenoate + H(+). The enzyme catalyses 1,2-di-(9Z-octadecenoyl)-sn-glycero-3-phosphocholine + H2O = (9Z-octadecenoyl)-sn-glycero-3-phosphocholine + (9Z)-octadecenoate + H(+). It carries out the reaction 1,2,3-tributanoylglycerol + H2O = dibutanoylglycerol + butanoate + H(+). The catalysed reaction is 1,2-dihexadecanoyl-sn-glycero-3-phosphocholine + H2O = hexadecanoyl-sn-glycero-3-phosphocholine + hexadecanoate + H(+). With respect to regulation, phospholipase A1 and lysophospholipase activities are inhibited by annexin II. Its function is as follows. Catalyzes the hydrolysis of triglycerides and phospholipids present in circulating plasma lipoproteins, including chylomicrons, intermediate density lipoproteins (IDL), low density lipoproteins (LDL) of large size and high density lipoproteins (HDL), releasing free fatty acids (FFA) and smaller lipoprotein particles. Also exhibits lysophospholipase activity. Can hydrolyze both neutral lipid and phospholipid substrates but shows a greater binding affinity for neutral lipid substrates than phospholipid substrates. In native LDL, preferentially hydrolyzes the phosphatidylcholine species containing polyunsaturated fatty acids at sn-2 position. The sequence is that of Hepatic triacylglycerol lipase (Lipc) from Rattus norvegicus (Rat).